The following is a 218-amino-acid chain: Nucleoid occlusion factor SlmA (218 aa).

The 61-residue stretch at E30–L90 folds into the HTH tetR-type domain. Positions T53–F72 form a DNA-binding region, H-T-H motif.

This sequence belongs to the nucleoid occlusion factor SlmA family. In terms of assembly, homodimer. Interacts with FtsZ.

It is found in the cytoplasm. The protein localises to the nucleoid. Functionally, required for nucleoid occlusion (NO) phenomenon, which prevents Z-ring formation and cell division over the nucleoid. Acts as a DNA-associated cell division inhibitor that binds simultaneously chromosomal DNA and FtsZ, and disrupts the assembly of FtsZ polymers. SlmA-DNA-binding sequences (SBS) are dispersed on non-Ter regions of the chromosome, preventing FtsZ polymerization at these regions. The chain is Nucleoid occlusion factor SlmA from Haemophilus influenzae (strain PittGG).